We begin with the raw amino-acid sequence, 435 residues long: Methylenetetrahydrofolate--tRNA-(uracil-5-)-methyltransferase TrmFO (435 aa).

9-14 (GAGLAG) is an FAD binding site.

This sequence belongs to the MnmG family. TrmFO subfamily. FAD serves as cofactor.

Its subcellular location is the cytoplasm. It carries out the reaction uridine(54) in tRNA + (6R)-5,10-methylene-5,6,7,8-tetrahydrofolate + NADH + H(+) = 5-methyluridine(54) in tRNA + (6S)-5,6,7,8-tetrahydrofolate + NAD(+). The catalysed reaction is uridine(54) in tRNA + (6R)-5,10-methylene-5,6,7,8-tetrahydrofolate + NADPH + H(+) = 5-methyluridine(54) in tRNA + (6S)-5,6,7,8-tetrahydrofolate + NADP(+). Its function is as follows. Catalyzes the folate-dependent formation of 5-methyl-uridine at position 54 (M-5-U54) in all tRNAs. The protein is Methylenetetrahydrofolate--tRNA-(uracil-5-)-methyltransferase TrmFO of Staphylococcus haemolyticus (strain JCSC1435).